Here is a 321-residue protein sequence, read N- to C-terminus: Fructose-1,6-bisphosphatase 2 class 2 (321 aa).

4 residues coordinate Mn(2+): Asp-32, Glu-56, Asp-84, and Glu-87. Substrate contacts are provided by residues 87–89, Tyr-118, 163–165, 185–187, and Gly-209; these read EGT, KPR, and DGD. Glu-212 is a Mn(2+) binding site.

It belongs to the FBPase class 2 family. In terms of assembly, homodimer. Mn(2+) serves as cofactor.

It carries out the reaction beta-D-fructose 1,6-bisphosphate + H2O = beta-D-fructose 6-phosphate + phosphate. Competitively inhibited by low concentrations of phosphate (IC50 of 1.2 mM) and is also sensitive to Li(+) (IC50 of 15.8 mM). Also inhibited by 1 mM ATP or 50 mM KCl (60% and 20% residual activity, respectively). Slightly activated (40-50%) by the addition of 1 mM dithiothreitol in vitro. Catalyzes the hydrolysis of fructose 1,6-bisphosphate to fructose 6-phosphate. Also displays a low activity toward glucose 1,6-bisphosphate, and no activity against ribulose 1,5-bisphosphate, fructose 2,6-bisphosphate, or fructose 1-phosphate. The sequence is that of Fructose-1,6-bisphosphatase 2 class 2 (yggF) from Escherichia coli (strain K12).